The primary structure comprises 192 residues: Phosphoheptose isomerase (192 aa).

The 158-residue stretch at 35–192 (LIETLENQGK…CIERHFAHKN (158 aa)) folds into the SIS domain. 50 to 52 (NGG) contacts substrate. Zn(2+)-binding residues include histidine 59 and glutamate 63. Substrate is bound by residues glutamate 63, 92–93 (ND), 118–120 (STS), serine 123, and glutamine 170. Zn(2+)-binding residues include glutamine 170 and histidine 178.

It belongs to the SIS family. GmhA subfamily. Homotetramer. The cofactor is Zn(2+).

Its subcellular location is the cytoplasm. The catalysed reaction is 2 D-sedoheptulose 7-phosphate = D-glycero-alpha-D-manno-heptose 7-phosphate + D-glycero-beta-D-manno-heptose 7-phosphate. It functions in the pathway carbohydrate biosynthesis; D-glycero-D-manno-heptose 7-phosphate biosynthesis; D-glycero-alpha-D-manno-heptose 7-phosphate and D-glycero-beta-D-manno-heptose 7-phosphate from sedoheptulose 7-phosphate: step 1/1. The protein operates within bacterial outer membrane biogenesis; LPS core biosynthesis. Its function is as follows. Catalyzes the isomerization of sedoheptulose 7-phosphate in D-glycero-D-manno-heptose 7-phosphate. In Helicobacter pylori (strain ATCC 700392 / 26695) (Campylobacter pylori), this protein is Phosphoheptose isomerase.